The chain runs to 179 residues: ATP synthase subunit delta (179 aa).

It belongs to the ATPase delta chain family. As to quaternary structure, F-type ATPases have 2 components, F(1) - the catalytic core - and F(0) - the membrane proton channel. F(1) has five subunits: alpha(3), beta(3), gamma(1), delta(1), epsilon(1). F(0) has three main subunits: a(1), b(2) and c(10-14). The alpha and beta chains form an alternating ring which encloses part of the gamma chain. F(1) is attached to F(0) by a central stalk formed by the gamma and epsilon chains, while a peripheral stalk is formed by the delta and b chains.

Its subcellular location is the cell inner membrane. In terms of biological role, f(1)F(0) ATP synthase produces ATP from ADP in the presence of a proton or sodium gradient. F-type ATPases consist of two structural domains, F(1) containing the extramembraneous catalytic core and F(0) containing the membrane proton channel, linked together by a central stalk and a peripheral stalk. During catalysis, ATP synthesis in the catalytic domain of F(1) is coupled via a rotary mechanism of the central stalk subunits to proton translocation. Its function is as follows. This protein is part of the stalk that links CF(0) to CF(1). It either transmits conformational changes from CF(0) to CF(1) or is implicated in proton conduction. The polypeptide is ATP synthase subunit delta (Burkholderia ambifaria (strain ATCC BAA-244 / DSM 16087 / CCUG 44356 / LMG 19182 / AMMD) (Burkholderia cepacia (strain AMMD))).